Consider the following 154-residue polypeptide: Fibroblast growth factor 2 (154 aa).

A propeptide spanning residues 1-9 (MAAGSITSL) is cleaved from the precursor. The tract at residues 1 to 20 (MAAGSITSLPALPEDGGGAF) is disordered. Asparagine 35 contributes to the heparin binding site. Tyrosine 81 bears the Phosphotyrosine; by TEC mark. Lysine 94 is covalently cross-linked (Glycyl lysine isopeptide (Lys-Gly) (interchain with G-Cter in SUMO1)). Residues 127 to 143 (KRTGQYKLGSKTGPGQK) form a heparin-binding region.

The protein belongs to the heparin-binding growth factors family. Monomer. Homodimer. Interacts with FGFR1, FGFR2, FGFR3 and FGFR4. Affinity between fibroblast growth factors (FGFs) and their receptors is increased by heparan sulfate glycosaminoglycans that function as coreceptors. Interacts with CSPG4, FGFBP1 and TEC. Found in a complex with FGFBP1, FGF1 and FGF2. Interacts with FGFBP3. Interacts with integrin ITGAV:ITGB3; the interaction is required for FGF2 signaling. Interacts with SNORC (via the extracellular domain). Interacts with GPC3. Post-translationally, phosphorylation at Tyr-81 regulates FGF2 unconventional secretion. In terms of tissue distribution, found in all tissues examined.

Its subcellular location is the secreted. The protein resides in the nucleus. In terms of biological role, acts as a ligand for FGFR1, FGFR2, FGFR3 and FGFR4. Also acts as an integrin ligand which is required for FGF2 signaling. Binds to integrin ITGAV:ITGB3. Plays an important role in the regulation of cell survival, cell division, cell differentiation and cell migration. Functions as a potent mitogen in vitro. Can induce angiogenesis. Mediates phosphorylation of ERK1/2 and thereby promotes retinal lens fiber differentiation. This is Fibroblast growth factor 2 (Fgf2) from Rattus norvegicus (Rat).